The sequence spans 175 residues: Methylated-DNA--protein-cysteine methyltransferase (175 aa).

Cysteine 142 (nucleophile; methyl group acceptor) is an active-site residue.

The protein belongs to the MGMT family.

The protein localises to the cytoplasm. It catalyses the reaction a 6-O-methyl-2'-deoxyguanosine in DNA + L-cysteinyl-[protein] = S-methyl-L-cysteinyl-[protein] + a 2'-deoxyguanosine in DNA. The catalysed reaction is a 4-O-methyl-thymidine in DNA + L-cysteinyl-[protein] = a thymidine in DNA + S-methyl-L-cysteinyl-[protein]. Involved in the cellular defense against the biological effects of O6-methylguanine (O6-MeG) and O4-methylthymine (O4-MeT) in DNA. Repairs the methylated nucleobase in DNA by stoichiometrically transferring the methyl group to a cysteine residue in the enzyme. This is a suicide reaction: the enzyme is irreversibly inactivated. The chain is Methylated-DNA--protein-cysteine methyltransferase from Thermococcus barophilus (strain DSM 11836 / MP).